Reading from the N-terminus, the 1149-residue chain is Golgi apparatus protein 1 homolog (1149 aa).

The signal sequence occupies residues 1–19 (MWRFPLILASVCWLTTAQQ). Over 20 to 1115 (QNVANDPDKK…NLVMEHPERN (1096 aa)) the chain is Extracellular. 16 Cys-rich GLG1 repeats span residues 24–69 (NDPD…FSET), 71–135 (TLSE…KNVT), 139–207 (KCHA…VKNA), 216–276 (ILGD…NDKF), 277–344 (MDPE…NQPE), 349–411 (QPSK…ESRN), 415–475 (KLGA…NVDS), 477–549 (DMVP…YDEQ), 551–610 (PLSV…ETDN), 613–676 (RKHP…DAKE), 677–736 (MNNK…FEHK), 743–803 (DLTD…IECL), 809–867 (HLGP…IVRL), 868–938 (LQRE…RQSI), 945–1009 (DFSP…NKGL), and 1010–1070 (IRDK…DKQE). Asn133 is a glycosylation site (N-linked (GlcNAc...) asparagine). Residue Asn411 is glycosylated (N-linked (GlcNAc...) asparagine). A helical transmembrane segment spans residues 1116–1136 (SILGYLAGFIVFILLIGCCCG). At 1137-1149 (RVSKKQYIEMKNR) the chain is on the cytoplasmic side.

The protein localises to the membrane. In Caenorhabditis elegans, this protein is Golgi apparatus protein 1 homolog.